A 176-amino-acid polypeptide reads, in one-letter code: Tubulin polymerization-promoting protein family member 3 (176 aa).

Ala2 carries the post-translational modification N-acetylalanine.

The protein belongs to the TPPP family.

It is found in the cytoplasm. The protein localises to the cytoskeleton. Regulator of microtubule dynamic that has microtubule bundling activity. Required for embryo implantation; possibly by regulating beta-catenin. Also required for decidualization via regulation of beta-catenin. This chain is Tubulin polymerization-promoting protein family member 3 (Tppp3), found in Rattus norvegicus (Rat).